Consider the following 137-residue polypeptide: MFANIGWGEMLILVIAGLVILGPERLPGAIRWTSNALRQARDYVSGATTQLRQDFGPEFEDLREPITELQKLRGMTPRAALTKHLLDGDDSFFTGKFDQQNGKPAAGQEKPVTPVNPPVTATPPSESTATPFDSDAT.

A helical transmembrane segment spans residues Phe-2 to Gly-22. The tract at residues Phe-92–Thr-137 is disordered. The span at Thr-122–Pro-131 shows a compositional bias: low complexity.

Belongs to the TatB family. As to quaternary structure, the Tat system comprises two distinct complexes: a TatABC complex, containing multiple copies of TatA, TatB and TatC subunits, and a separate TatA complex, containing only TatA subunits. Substrates initially bind to the TatABC complex, which probably triggers association of the separate TatA complex to form the active translocon.

It is found in the cell membrane. In terms of biological role, part of the twin-arginine translocation (Tat) system that transports large folded proteins containing a characteristic twin-arginine motif in their signal peptide across membranes. Together with TatC, TatB is part of a receptor directly interacting with Tat signal peptides. TatB may form an oligomeric binding site that transiently accommodates folded Tat precursor proteins before their translocation. The chain is Sec-independent protein translocase protein TatB from Mycobacterium sp. (strain JLS).